An 88-amino-acid polypeptide reads, in one-letter code: Small ribosomal subunit protein bS20 (88 aa).

The interval 1 to 28 (MANIKSQIKRNKTNEKARLRNKAVKSSL) is disordered.

Belongs to the bacterial ribosomal protein bS20 family.

In terms of biological role, binds directly to 16S ribosomal RNA. This is Small ribosomal subunit protein bS20 from Streptomyces avermitilis (strain ATCC 31267 / DSM 46492 / JCM 5070 / NBRC 14893 / NCIMB 12804 / NRRL 8165 / MA-4680).